The following is a 175-amino-acid chain: Adenine phosphoribosyltransferase (175 aa).

It belongs to the purine/pyrimidine phosphoribosyltransferase family. Homodimer.

The protein localises to the cytoplasm. It catalyses the reaction AMP + diphosphate = 5-phospho-alpha-D-ribose 1-diphosphate + adenine. The protein operates within purine metabolism; AMP biosynthesis via salvage pathway; AMP from adenine: step 1/1. In terms of biological role, catalyzes a salvage reaction resulting in the formation of AMP, that is energically less costly than de novo synthesis. This Oenococcus oeni (strain ATCC BAA-331 / PSU-1) protein is Adenine phosphoribosyltransferase.